We begin with the raw amino-acid sequence, 214 residues long: RNA pyrophosphohydrolase (214 aa).

The region spanning 6–149 (GFRPNVGIIL…KRDVYQLALT (144 aa)) is the Nudix hydrolase domain. Residues 38–59 (GGIKYGETPMQAMYRELHEETG) carry the Nudix box motif.

This sequence belongs to the Nudix hydrolase family. RppH subfamily. Requires a divalent metal cation as cofactor.

In terms of biological role, accelerates the degradation of transcripts by removing pyrophosphate from the 5'-end of triphosphorylated RNA, leading to a more labile monophosphorylated state that can stimulate subsequent ribonuclease cleavage. The protein is RNA pyrophosphohydrolase of Burkholderia orbicola (strain MC0-3).